The chain runs to 253 residues: Phosphoadenosine 5'-phosphosulfate reductase (253 aa).

C239 acts as the Nucleophile; cysteine thiosulfonate intermediate in catalysis.

Belongs to the PAPS reductase family. CysH subfamily.

It is found in the cytoplasm. It carries out the reaction [thioredoxin]-disulfide + sulfite + adenosine 3',5'-bisphosphate + 2 H(+) = [thioredoxin]-dithiol + 3'-phosphoadenylyl sulfate. Its pathway is sulfur metabolism; hydrogen sulfide biosynthesis; sulfite from sulfate: step 3/3. Catalyzes the formation of sulfite from phosphoadenosine 5'-phosphosulfate (PAPS) using thioredoxin as an electron donor. This Aliivibrio fischeri (strain ATCC 700601 / ES114) (Vibrio fischeri) protein is Phosphoadenosine 5'-phosphosulfate reductase.